We begin with the raw amino-acid sequence, 387 residues long: DNA primase small subunit PriS (387 aa).

Active-site residues include Asp-98, Asp-100, and Asp-289.

The protein belongs to the eukaryotic-type primase small subunit family. Heterodimer of a small subunit (PriS) and a large subunit (PriL). Requires Mg(2+) as cofactor. The cofactor is Mn(2+).

Catalytic subunit of DNA primase, an RNA polymerase that catalyzes the synthesis of short RNA molecules used as primers for DNA polymerase during DNA replication. The small subunit contains the primase catalytic core and has DNA synthesis activity on its own. Binding to the large subunit stabilizes and modulates the activity, increasing the rate of DNA synthesis while decreasing the length of the DNA fragments, and conferring RNA synthesis capability. The DNA polymerase activity may enable DNA primase to also catalyze primer extension after primer synthesis. May also play a role in DNA repair. The sequence is that of DNA primase small subunit PriS from Halorubrum lacusprofundi (strain ATCC 49239 / DSM 5036 / JCM 8891 / ACAM 34).